A 187-amino-acid polypeptide reads, in one-letter code: RNA pyrophosphohydrolase (187 aa).

A Nudix hydrolase domain is found at 6–149 (GYRANVGIIL…KRQVYRQALT (144 aa)). The short motif at 38-59 (GGIKSGETPTEAMYRELAEETG) is the Nudix box element. Residues 166-187 (AYREPLEPVEKNRKKSSDTRQS) are disordered.

The protein belongs to the Nudix hydrolase family. RppH subfamily. It depends on a divalent metal cation as a cofactor.

Functionally, accelerates the degradation of transcripts by removing pyrophosphate from the 5'-end of triphosphorylated RNA, leading to a more labile monophosphorylated state that can stimulate subsequent ribonuclease cleavage. This is RNA pyrophosphohydrolase from Nitrosomonas europaea (strain ATCC 19718 / CIP 103999 / KCTC 2705 / NBRC 14298).